Consider the following 166-residue polypeptide: Ribonuclease H (166 aa).

The RNase H type-1 domain occupies 10–151 (KRVRVDMFTD…ADELARRGTS (142 aa)). The Mg(2+) site is built by Asp19, Glu57, Asp79, and Asp143. Residues 145–157 (LARRGTSEARQGK) are compositionally biased toward basic and acidic residues. The segment at 145-166 (LARRGTSEARQGKVDGQSSTIL) is disordered.

The protein belongs to the RNase H family. Monomer. Requires Mg(2+) as cofactor.

It localises to the cytoplasm. It carries out the reaction Endonucleolytic cleavage to 5'-phosphomonoester.. Endonuclease that specifically degrades the RNA of RNA-DNA hybrids. This is Ribonuclease H from Rhodospirillum rubrum (strain ATCC 11170 / ATH 1.1.1 / DSM 467 / LMG 4362 / NCIMB 8255 / S1).